Here is a 129-residue protein sequence, read N- to C-terminus: Transcriptional activator protein (129 aa).

A compositionally biased stretch (low complexity) spans 1-12; the sequence is MRSSSPSQPPSI. Residues 1 to 21 form a disordered region; that stretch reads MRSSSPSQPPSIKKAHRQAKR. Positions 13 to 28 match the Nuclear localization signal motif; the sequence is KKAHRQAKRRAIRRRR. The segment at 33-50 is a zinc-finger region; the sequence is CGCSIYFHIDCTGHGFTH. A disordered region spans residues 84–114; that stretch reads IHQNEDIPCTNTVQPQPEESVASPQSLPELP. A compositionally biased stretch (polar residues) spans 92 to 109; the sequence is CTNTVQPQPEESVASPQS. The interval 115 to 129 is transactivation; the sequence is SLDDFDDSFWVNLFK.

It belongs to the geminiviridae transcriptional activator protein family. Monomer. Homodimer. Homooligomer. Self-interaction correlates with nuclear localization and efficient activation of transcription. Monomers suppress local silencing by interacting with and inactivating host adenosine kinase 2 (ADK2) in the cytoplasm. Interacts with and inhibits host SNF1 kinase. Binds to ssDNA. In terms of processing, phosphorylated.

The protein resides in the host nucleus. It is found in the host cytoplasm. In terms of biological role, strong activator of the late viral genes promoters. Enhances the expression of the capsid protein and nuclear shuttle protein. Acts as a suppressor of RNA-mediated gene silencing, also known as post-transcriptional gene silencing (PTGS), a mechanism of plant viral defense that limits the accumulation of viral RNAs. Suppresses the host RNA silencing by inhibiting adenosine kinase 2 (ADK2), a kinase involved in a general methylation pathway. Also suppresses the host basal defense by interacting with and inhibiting SNF1 kinase, a key regulator of cell metabolism implicated in innate antiviral defense. Determines pathogenicity. The polypeptide is Transcriptional activator protein (Abutilon (Upland cotton)).